The sequence spans 370 residues: tRNA-specific 2-thiouridylase MnmA (370 aa).

ATP is bound by residues 11-18 (AMSGGVDS) and methionine 37. The tract at residues 99–101 (NPD) is interaction with target base in tRNA. Residue cysteine 104 is the Nucleophile of the active site. Cysteine 104 and cysteine 201 are disulfide-bonded. Glycine 129 contacts ATP. The segment at 151–153 (KDQ) is interaction with tRNA. Catalysis depends on cysteine 201, which acts as the Cysteine persulfide intermediate. The interval 313–314 (RY) is interaction with tRNA.

The protein belongs to the MnmA/TRMU family. As to quaternary structure, interacts with TusE.

It is found in the cytoplasm. It carries out the reaction S-sulfanyl-L-cysteinyl-[protein] + uridine(34) in tRNA + AH2 + ATP = 2-thiouridine(34) in tRNA + L-cysteinyl-[protein] + A + AMP + diphosphate + H(+). Catalyzes the 2-thiolation of uridine at the wobble position (U34) of tRNA(Lys), tRNA(Glu) and tRNA(Gln), leading to the formation of s(2)U34, the first step of tRNA-mnm(5)s(2)U34 synthesis. Sulfur is provided by IscS, via a sulfur-relay system. Binds ATP and its substrate tRNAs. In Buchnera aphidicola subsp. Baizongia pistaciae (strain Bp), this protein is tRNA-specific 2-thiouridylase MnmA.